Reading from the N-terminus, the 404-residue chain is Multidrug resistance protein MdtG (404 aa).

A run of 11 helical transmembrane segments spans residues 19–39, 56–76, 90–110, 113–133, 144–164, 171–191, 222–242, 254–274, 288–308, 317–337, and 376–396; these read LGCF…PLYV, LVFS…GGLA, LGMA…QFLI, ALLG…ATQA, TLST…GLLA, PVFF…FFFI, LFVT…ILTL, IAFI…LSAP, ILIV…FVQT, FLLG…LVYN, and AVFC…WNSL.

This sequence belongs to the major facilitator superfamily. DHA1 family. MdtG (TC 2.A.1.2.20) subfamily.

It is found in the cell inner membrane. This Salmonella paratyphi A (strain ATCC 9150 / SARB42) protein is Multidrug resistance protein MdtG.